Here is a 116-residue protein sequence, read N- to C-terminus: Ribosome-binding factor A (116 aa).

Belongs to the RbfA family. In terms of assembly, monomer. Binds 30S ribosomal subunits, but not 50S ribosomal subunits or 70S ribosomes.

Its subcellular location is the cytoplasm. One of several proteins that assist in the late maturation steps of the functional core of the 30S ribosomal subunit. Associates with free 30S ribosomal subunits (but not with 30S subunits that are part of 70S ribosomes or polysomes). Required for efficient processing of 16S rRNA. May interact with the 5'-terminal helix region of 16S rRNA. The polypeptide is Ribosome-binding factor A (Streptococcus pneumoniae (strain ATCC BAA-255 / R6)).